A 364-amino-acid chain; its full sequence is Fructose-bisphosphate aldolase B (364 aa).

Substrate-binding residues include R56 and K147. Residue E188 is the Proton acceptor of the active site. K230 functions as the Schiff-base intermediate with dihydroxyacetone-P in the catalytic mechanism.

Belongs to the class I fructose-bisphosphate aldolase family. In terms of assembly, homotetramer.

It localises to the cytoplasm. It is found in the cytoskeleton. The protein localises to the microtubule organizing center. The protein resides in the centrosome. Its subcellular location is the centriolar satellite. It carries out the reaction beta-D-fructose 1,6-bisphosphate = D-glyceraldehyde 3-phosphate + dihydroxyacetone phosphate. The protein operates within carbohydrate degradation; glycolysis; D-glyceraldehyde 3-phosphate and glycerone phosphate from D-glucose: step 4/4. This is Fructose-bisphosphate aldolase B (ALDOB) from Gallus gallus (Chicken).